The primary structure comprises 451 residues: Cindoxin reductase (451 aa).

FAD-binding residues include A24, E45, L53, and V89. NADP(+) contacts are provided by residues 157 to 160 (NGNV) and 197 to 198 (RS). FAD-binding positions include W338 and 345–347 (GGI). Residue G345 participates in NADP(+) binding.

The protein belongs to the ferredoxin--NADP reductase type 1 family. Requires FAD as cofactor.

Its function is as follows. Involved in the degradation of cineol (eucalyptol). Catalyzes the reduction of cindoxin (CinC). The polypeptide is Cindoxin reductase (cinB) (Citrobacter braakii).